Here is a 175-residue protein sequence, read N- to C-terminus: Large ribosomal subunit protein eL14 (175 aa).

The segment at 150 to 175 (KAAKMDSTEGAKRRMQKAIAARKAKK) is disordered. A compositionally biased stretch (basic and acidic residues) spans 152–161 (AKMDSTEGAK). Positions 162 to 175 (RRMQKAIAARKAKK) are enriched in basic residues.

This sequence belongs to the eukaryotic ribosomal protein eL14 family.

In terms of biological role, component of the large ribosomal subunit. The ribosome is a large ribonucleoprotein complex responsible for the synthesis of proteins in the cell. The sequence is that of Large ribosomal subunit protein eL14 (RPL14) from Leishmania donovani.